A 279-amino-acid polypeptide reads, in one-letter code: tRNA pseudouridine synthase B (279 aa).

D38 serves as the catalytic Nucleophile.

This sequence belongs to the pseudouridine synthase TruB family. Type 1 subfamily.

It catalyses the reaction uridine(55) in tRNA = pseudouridine(55) in tRNA. Responsible for synthesis of pseudouridine from uracil-55 in the psi GC loop of transfer RNAs. This is tRNA pseudouridine synthase B from Acholeplasma laidlawii (strain PG-8A).